The following is a 376-amino-acid chain: MQLRREIFDKARRVVVKVGSAILTNVGGIHTSFIADLAREISYLRQSGHEVILVSSGAVAAGRKKISWQDSAPLGMKEKQALAAIGQSHLMRTYEEAFGFYELDVAQILLTHADLSHRDRYLNIRNTILTLLKFGVTPIINENDTVSVEELKFGDNDTLAALLTNLLEADICICLTDVDALYDKNPQKDPTARPLHIVTKISPEIEAMAGNSNSLFGTGGMQSKIRAAKIVFSGGGTAIIGPGRAPRVLQRLFAGEDIGTIFLPCKERMKSKKQWIAHVLKPKGTLLLDAGACKALLQGGKSLLPSGIVGISGEFDRGDSVNCCRLDGSRIAVGLVNYASVDVNAIKGLQSREIASVLKCCDNEEVIHRDNLVILS.

Lysine 17 is a binding site for ATP. 3 residues coordinate substrate: serine 56, aspartate 144, and asparagine 156. ATP is bound by residues 176–177 (TD) and 218–224 (TGGMQSK). The PUA domain occupies 283 to 359 (KGTLLLDAGA…QSREIASVLK (77 aa)).

It belongs to the glutamate 5-kinase family.

The protein localises to the cytoplasm. It carries out the reaction L-glutamate + ATP = L-glutamyl 5-phosphate + ADP. Its pathway is amino-acid biosynthesis; L-proline biosynthesis; L-glutamate 5-semialdehyde from L-glutamate: step 1/2. Catalyzes the transfer of a phosphate group to glutamate to form L-glutamate 5-phosphate. The protein is Glutamate 5-kinase of Desulfotalea psychrophila (strain LSv54 / DSM 12343).